We begin with the raw amino-acid sequence, 30 residues long: Beta-endorphin-2 (30 aa).

An N-acetyltyrosine modification is found at Y1.

Belongs to the POMC family.

The protein localises to the secreted. This Oncorhynchus keta (Chum salmon) protein is Beta-endorphin-2.